Reading from the N-terminus, the 401-residue chain is MDLTQQAKDIQNITVQETNKNNSESIECSKITMDLKFNNSRKYISITVPSKTQTMSPHIKSVDDVVVLGMNLSKFNKLTQFFICVAGVFVFYLIYGYLQELIFSVEGFKSCGWYLTLVQFAFYSIFGLIELQLIQDKRRRIPGKTYMIIAFLTVGTMGLSNTSLGYLNYPTQVIFKCCKLIPVMLGGVFIQGKRYNVADVSAAICMSLGLIWFTLADSTTAPNFNLTGVVLISLALCADAVIGNVQEKAMKLHNASNSEMVLYSYSIGFVYILLGLTCTSGLGPAVTFCAKNPVRTYGYAFLFSLTGYFGISFVLALIKIFGALIAVTVTTGRKAMTIVLSFIFFAKPFTFQYVWSGLLVVLGIFLNVYSKNMDKIRLPSLYDLINKSVEARKSRTLAQTV.

Residues Asn-12 and Asn-71 are each glycosylated (N-linked (GlcNAc...) asparagine). A run of 6 helical transmembrane segments spans residues 78–98, 114–134, 147–167, 170–190, 196–216, and 223–243; these read LTQFFICVAGVFVFYLIYGYL, YLTLVQFAFYSIFGLIELQLI, MIIAFLTVGTMGLSNTSLGYL, PTQVIFKCCKLIPVMLGGVFI, NVADVSAAICMSLGLIWFTLA, and NFNLTGVVLISLALCADAVIG. N-linked (GlcNAc...) asparagine glycosylation is present at Asn-254. The next 4 membrane-spanning stretches (helical) occupy residues 267–287, 298–317, 324–346, and 349–369; these read IGFVYILLGLTCTSGLGPAVT, GYAFLFSLTGYFGISFVLAL, LIAVTVTTGRKAMTIVLSFIFFA, and FTFQYVWSGLLVVLGIFLNVY.

Belongs to the nucleotide-sugar transporter family. SLC35B subfamily. In terms of tissue distribution, preferentially and highly expressed in colon.

It is found in the golgi apparatus membrane. The enzyme catalyses 3'-phosphoadenylyl sulfate(in) + adenosine 3',5'-bisphosphate(out) = 3'-phosphoadenylyl sulfate(out) + adenosine 3',5'-bisphosphate(in). Its function is as follows. Probably functions as a 3'-phosphoadenylyl sulfate:adenosine 3',5'-bisphosphate antiporter at the Golgi membranes. Mediates the transport from the cytosol into the lumen of the Golgi of 3'-phosphoadenylyl sulfate/adenosine 3'-phospho 5'-phosphosulfate (PAPS), a universal sulfuryl donor for sulfation events that take place in that compartment. The protein is Adenosine 3'-phospho 5'-phosphosulfate transporter 2 of Homo sapiens (Human).